A 408-amino-acid polypeptide reads, in one-letter code: Putative mannan endo-1,4-beta-mannosidase 4 (408 aa).

A signal peptide spans 1-23; the sequence is MKCLCFIVLLAIVIAQSYVGVEA. N-linked (GlcNAc...) asparagine glycosylation occurs at Asn-73. Substrate contacts are provided by Trp-85 and Asn-201. Glu-202 serves as the catalytic Proton donor. Glu-322 (nucleophile) is an active-site residue. Trp-364 is a substrate binding site.

Belongs to the glycosyl hydrolase 5 (cellulase A) family.

The protein resides in the secreted. It catalyses the reaction Random hydrolysis of (1-&gt;4)-beta-D-mannosidic linkages in mannans, galactomannans and glucomannans.. The polypeptide is Putative mannan endo-1,4-beta-mannosidase 4 (MAN4) (Arabidopsis thaliana (Mouse-ear cress)).